An 82-amino-acid polypeptide reads, in one-letter code: RNA-binding protein Hfq (82 aa).

The region spanning 9 to 69 (DHFLNQLRKE…ISTFSPARNV (61 aa)) is the Sm domain.

Belongs to the Hfq family. As to quaternary structure, homohexamer.

Its function is as follows. RNA chaperone that binds small regulatory RNA (sRNAs) and mRNAs to facilitate mRNA translational regulation in response to envelope stress, environmental stress and changes in metabolite concentrations. Also binds with high specificity to tRNAs. The chain is RNA-binding protein Hfq from Exiguobacterium sp. (strain ATCC BAA-1283 / AT1b).